We begin with the raw amino-acid sequence, 283 residues long: Adenosyl-chloride synthase (283 aa).

Substrate is bound by residues Asp-11, 70–72, and 128–131; these read YVY and TWYG. Gly-131 lines the chloride pocket.

The protein belongs to the SAM hydrolase / SAM-dependent halogenase family. In terms of assembly, homotrimer.

The enzyme catalyses chloride + S-adenosyl-L-methionine = 5'-chloro-5'-deoxyadenosine + L-methionine. Involved in the biosynthesis of the proteosome inhibitor salinosporamide A (SalA). Catalyzes the halogenation of S-adenosyl-L-methionine (SAM) with chloride to generate 5'-chloro-5'-deoxyadenosine (5'-CIDA) and L-methionine. It can also use bromide and iodide, producing halogenated 5'-deoxyadenosine (5'-XDA) and L-methionine, however no halogenase activity is detected in the presence of fluoride. The protein is Adenosyl-chloride synthase of Salinispora tropica (strain ATCC BAA-916 / DSM 44818 / JCM 13857 / NBRC 105044 / CNB-440).